The sequence spans 795 residues: Phenylalanine--tRNA ligase beta subunit (795 aa).

A tRNA-binding domain is found at 39–148; sequence AGSFNGVVVG…ADAPLGTDIR (110 aa). In terms of domain architecture, B5 spans 401-476; that stretch reads PKRATITLRR…RVYGYNNIPD (76 aa). The Mg(2+) site is built by Asp-454, Asp-460, Glu-463, and Glu-464. An FDX-ACB domain is found at 701-794; sequence SRFPANRRDI…LKERFQASLR (94 aa).

It belongs to the phenylalanyl-tRNA synthetase beta subunit family. Type 1 subfamily. As to quaternary structure, tetramer of two alpha and two beta subunits. Mg(2+) is required as a cofactor.

It is found in the cytoplasm. It catalyses the reaction tRNA(Phe) + L-phenylalanine + ATP = L-phenylalanyl-tRNA(Phe) + AMP + diphosphate + H(+). The protein is Phenylalanine--tRNA ligase beta subunit of Salmonella paratyphi A (strain ATCC 9150 / SARB42).